Reading from the N-terminus, the 423-residue chain is UPF0229 protein Pmen_4018 (423 aa).

A disordered region spans residues 65–108 (HHGRGGKQTIVHPGNKEFTAGERIPRPQGGGGGRGSGKASNSGE).

Belongs to the UPF0229 family.

This chain is UPF0229 protein Pmen_4018, found in Ectopseudomonas mendocina (strain ymp) (Pseudomonas mendocina).